The following is a 723-amino-acid chain: Transmembrane channel-like protein 7 (723 aa).

The interval 1 to 21 (MSESSASALQLGRPSRQPAVH) is disordered. At 1–168 (MSESSASALQ…GIQSYFSFLR (168 aa)) the chain is on the extracellular side. Asn-24 is a glycosylation site (N-linked (GlcNAc...) asparagine). Residues 51–70 (RRRTTVHSRDKQSGTLLKST) form a disordered region. Asn-84 is a glycosylation site (N-linked (GlcNAc...) asparagine). Ser-89 carries the phosphoserine modification. The N-linked (GlcNAc...) asparagine glycan is linked to Asn-96. A helical transmembrane segment spans residues 169–189 (FLVLLNLVIFLIIFMLVLLPI). Residues 190–219 (LLTKYKITNSSFVLIPFKDTDIQCTVYPVS) are Cytoplasmic-facing. A helical membrane pass occupies residues 220–240 (SSGLIYFYSYIIDLLSGTGFL). Topologically, residues 241-263 (EETSLFYGHYTIDGVKFQNFTYD) are extracellular. N-linked (GlcNAc...) asparagine glycosylation is present at Asn-259. The helical transmembrane segment at 264 to 284 (LPLAYLISTIAYLALSLLWIV) threads the bilayer. The Cytoplasmic segment spans residues 285-362 (KRSVEGFKIN…EETIRIYSLR (78 aa)). The chain crosses the membrane as a helical span at residues 363-383 (LFLNCIVLAVLGACFYAIYVA). Topologically, residues 384 to 404 (TVFSQEHMKKEIDKMVFGENL) are extracellular. The helical transmembrane segment at 405–425 (LILYLPSIVITLANFITPMIF) threads the bilayer. Topologically, residues 426–494 (AKIIRYEDYS…PCWETQVGQE (69 aa)) are cytoplasmic. The chain crosses the membrane as a helical span at residues 495-515 (MYKLMIFDFIIILAVTLFVDF). Over 516-555 (PRKLLVTYCSSWKLIQCWGQQEFAIPDNVLGIVYGQTICW) the chain is Extracellular. Residues 556–576 (IGAFFSPLLPAIATLKFIIIF) form a helical membrane-spanning segment. Topologically, residues 577-601 (YVKEWSLLYTCRPSPRPFRASNSNF) are cytoplasmic. The chain crosses the membrane as a helical span at residues 602–622 (FFLLVLLIGLCLAIIPLTISI). Residues 623–665 (SRIPSSKACGPFTNFNTTWEVIPKTVSTFPSSLQSFIHGVTSE) lie on the Extracellular side of the membrane. Asn-638 is a glycosylation site (N-linked (GlcNAc...) asparagine). A helical transmembrane segment spans residues 666–686 (AFAVPFFMIICLIMFYFIALA). Over 687 to 723 (GAHKRVVIQLREQLSLESRDKRYLIQKLTEAQRDTRN) the chain is Cytoplasmic.

The protein belongs to the TMC family. In terms of assembly, interacts with PIEZO2; the interaction inhibits PIEZO2-conducted mechanically activated currents.

The protein resides in the membrane. Its function is as follows. Acts as an inhibitory modulator of PIEZO2 mechanosensitive channel in dorsal root ganglion (DRG) neurons through physical interactions or interference with the interaction between Piezo2 and the cytoskeleton. This is Transmembrane channel-like protein 7 (TMC7) from Macaca fascicularis (Crab-eating macaque).